A 142-amino-acid chain; its full sequence is Fluoride-specific ion channel FluC 1 (142 aa).

Helical transmembrane passes span V23–D43, L54–G74, G79–F99, and L116–L136. Positions 91 and 94 each coordinate Na(+).

Belongs to the fluoride channel Fluc/FEX (TC 1.A.43) family.

It is found in the cell membrane. The enzyme catalyses fluoride(in) = fluoride(out). Its activity is regulated as follows. Na(+) is not transported, but it plays an essential structural role and its presence is essential for fluoride channel function. Functionally, fluoride-specific ion channel. Important for reducing fluoride concentration in the cell, thus reducing its toxicity. The polypeptide is Fluoride-specific ion channel FluC 1 (Nocardia farcinica (strain IFM 10152)).